We begin with the raw amino-acid sequence, 713 residues long: Early transcription factor 82 kDa subunit (713 aa).

It belongs to the poxviridae VETF large subunit family. Heterodimer of a 70 kDa and a 82 kDa subunit. Part of the early transcription complex composed of ETF, RAP94, and the DNA-directed RNA polymerase.

Its function is as follows. Acts with RNA polymerase to initiate transcription from early gene promoters. Is recruited by the RPO-associated protein of 94 kDa (RAP94) to form the early transcription complex, which also contains the core RNA polymerase. ETF heterodimer binds to early gene promoters. The polypeptide is Early transcription factor 82 kDa subunit (VETFL) (Yaba monkey tumor virus (strain VR587) (YMTV)).